Here is a 701-residue protein sequence, read N- to C-terminus: Elongation factor G (701 aa).

Residues 8 to 291 (GRYRNIGIVA…AVIDYLPAPT (284 aa)) form the tr-type G domain. GTP contacts are provided by residues 17-24 (AHVDAGKT), 89-93 (DTPGH), and 143-146 (NKMD).

Belongs to the TRAFAC class translation factor GTPase superfamily. Classic translation factor GTPase family. EF-G/EF-2 subfamily.

Its subcellular location is the cytoplasm. Functionally, catalyzes the GTP-dependent ribosomal translocation step during translation elongation. During this step, the ribosome changes from the pre-translocational (PRE) to the post-translocational (POST) state as the newly formed A-site-bound peptidyl-tRNA and P-site-bound deacylated tRNA move to the P and E sites, respectively. Catalyzes the coordinated movement of the two tRNA molecules, the mRNA and conformational changes in the ribosome. This Pseudomonas syringae pv. syringae (strain B728a) protein is Elongation factor G.